The sequence spans 114 residues: rRNA-processing protein cgrA (114 aa).

Positions 1 to 13 (MSSAAPAPSTHAA) are enriched in low complexity. Disordered stretches follow at residues 1 to 47 (MSSA…AARK) and 77 to 114 (RRAA…LLNS). The stretch at 40 to 101 (TKRAAARKEQ…EKMHRKRVER (62 aa)) forms a coiled coil. Positions 77 to 93 (RRAAKEEKERYEKMAEK) are enriched in basic and acidic residues. The span at 94–114 (MHRKRVERLKKREKRNKLLNS) shows a compositional bias: basic residues.

The protein belongs to the CGR1 family.

Its subcellular location is the nucleus. It is found in the nucleolus. Functionally, involved in nucleolar integrity and required for processing of the pre-rRNA for the 60S ribosome subunit. This chain is rRNA-processing protein cgrA (cgrA), found in Emericella nidulans (strain FGSC A4 / ATCC 38163 / CBS 112.46 / NRRL 194 / M139) (Aspergillus nidulans).